Reading from the N-terminus, the 368-residue chain is Phosphate acyltransferase (368 aa).

The segment at 338 to 368 (GDGGHDAGGAGTASPAPGHHAEPSAAQSSKA) is disordered.

It belongs to the PlsX family. Homodimer. Probably interacts with PlsY.

It localises to the cytoplasm. The enzyme catalyses a fatty acyl-[ACP] + phosphate = an acyl phosphate + holo-[ACP]. The protein operates within lipid metabolism; phospholipid metabolism. In terms of biological role, catalyzes the reversible formation of acyl-phosphate (acyl-PO(4)) from acyl-[acyl-carrier-protein] (acyl-ACP). This enzyme utilizes acyl-ACP as fatty acyl donor, but not acyl-CoA. This Burkholderia ambifaria (strain MC40-6) protein is Phosphate acyltransferase.